Here is a 640-residue protein sequence, read N- to C-terminus: 1,4-alpha-glucan branching enzyme GlgB (640 aa).

The active-site Nucleophile is Asp318. The active-site Proton donor is Glu371.

The protein belongs to the glycosyl hydrolase 13 family. GlgB subfamily. Monomer.

The enzyme catalyses Transfers a segment of a (1-&gt;4)-alpha-D-glucan chain to a primary hydroxy group in a similar glucan chain.. The protein operates within glycan biosynthesis; glycogen biosynthesis. Its function is as follows. Catalyzes the formation of the alpha-1,6-glucosidic linkages in glycogen by scission of a 1,4-alpha-linked oligosaccharide from growing alpha-1,4-glucan chains and the subsequent attachment of the oligosaccharide to the alpha-1,6 position. This chain is 1,4-alpha-glucan branching enzyme GlgB, found in Francisella tularensis subsp. tularensis (strain FSC 198).